A 342-amino-acid chain; its full sequence is Pre-mRNA-splicing factor 18 (342 aa).

Position 1 is an N-acetylmethionine (M1).

This sequence belongs to the PRP18 family. Heterodimer with PPIH. Interacts with PRPF4 and with the spliceosome. Part of a complex containing U4/U6 snRNPs.

It localises to the nucleus speckle. Its function is as follows. Participates in the second step of pre-mRNA splicing. In Bos taurus (Bovine), this protein is Pre-mRNA-splicing factor 18 (PRPF18).